A 100-amino-acid chain; its full sequence is NADH-quinone oxidoreductase subunit K (100 aa).

Transmembrane regions (helical) follow at residues 4–24, 28–48, and 60–80; these read LQHGLILAAILFVLGLTGLII, LLFMLISLEVMINAAALAFVV, and VMYILAITLAAAEASIGLALL.

The protein belongs to the complex I subunit 4L family. As to quaternary structure, NDH-1 is composed of 13 different subunits. Subunits NuoA, H, J, K, L, M, N constitute the membrane sector of the complex.

It localises to the cell inner membrane. The enzyme catalyses a quinone + NADH + 5 H(+)(in) = a quinol + NAD(+) + 4 H(+)(out). Functionally, NDH-1 shuttles electrons from NADH, via FMN and iron-sulfur (Fe-S) centers, to quinones in the respiratory chain. The immediate electron acceptor for the enzyme in this species is believed to be ubiquinone. Couples the redox reaction to proton translocation (for every two electrons transferred, four hydrogen ions are translocated across the cytoplasmic membrane), and thus conserves the redox energy in a proton gradient. The protein is NADH-quinone oxidoreductase subunit K of Yersinia enterocolitica serotype O:8 / biotype 1B (strain NCTC 13174 / 8081).